Reading from the N-terminus, the 729-residue chain is Transketolase (729 aa).

Histidine 97 provides a ligand contact to substrate. Residues histidine 138 and 186-188 (GPL) each bind thiamine diphosphate. Aspartate 227 is a binding site for Mg(2+). Thiamine diphosphate-binding residues include glycine 228 and asparagine 257. Mg(2+)-binding residues include asparagine 257 and isoleucine 259. Substrate is bound by residues histidine 332, arginine 423, and serine 450. Histidine 332 provides a ligand contact to thiamine diphosphate. The active-site Proton donor is the glutamate 477. Residue phenylalanine 503 participates in thiamine diphosphate binding. Substrate contacts are provided by histidine 527, aspartate 535, and arginine 586.

This sequence belongs to the transketolase family. In terms of assembly, homodimer. Requires Mg(2+) as cofactor. Ca(2+) is required as a cofactor. It depends on Mn(2+) as a cofactor. The cofactor is Co(2+). Thiamine diphosphate serves as cofactor.

The catalysed reaction is D-sedoheptulose 7-phosphate + D-glyceraldehyde 3-phosphate = aldehydo-D-ribose 5-phosphate + D-xylulose 5-phosphate. Functionally, catalyzes the transfer of a two-carbon ketol group from a ketose donor to an aldose acceptor, via a covalent intermediate with the cofactor thiamine pyrophosphate. This is Transketolase from Streptococcus pyogenes serotype M6 (strain ATCC BAA-946 / MGAS10394).